The following is a 372-amino-acid chain: Germination protease (372 aa).

A propeptide spanning residues 1 to 15 is cleaved from the precursor; it reads MNRSIDLSMYSVRTD.

It belongs to the peptidase A25 family. In terms of assembly, homotetramer. In terms of processing, autoproteolytically processed. The inactive tetrameric zymogen termed p46 autoprocesses to a smaller form termed p41, which is active only during spore germination.

The enzyme catalyses Endopeptidase action with P4 Glu or Asp, P1 preferably Glu &gt; Asp, P1' hydrophobic and P2' Ala.. Functionally, initiates the rapid degradation of small, acid-soluble proteins during spore germination. This is Germination protease from Geobacillus sp. (strain WCH70).